A 57-amino-acid polypeptide reads, in one-letter code: UPF0391 membrane protein RHECIAT_CH0003936 (57 aa).

The next 2 helical transmembrane spans lie at 4–24 and 33–53; these read WALIFFVISIIAGFFGFSGVS and VLFGIALVIFLIFLVLALMAG.

This sequence belongs to the UPF0391 family.

It localises to the cell membrane. The polypeptide is UPF0391 membrane protein RHECIAT_CH0003936 (Rhizobium etli (strain CIAT 652)).